The chain runs to 241 residues: MKIFNYKRVPYAEIRAFSVHILTASGSFLAFLGVVAASEHRFVDMFWWLGLALLVDGIDGPIARKVRVKEVLPNWSGDTLDNIIDYVTYVLLPAFALYQSGMIGEPLSFVAAGMIVVSSAIYYADMGMKTDEYFFSGFPVVWNMVVFTLFVMDASATTAMTVVTVSVFLTFLPINFLHPVRVKRLRPLNLLVVAIWCALGGYALLMHFETPTWAVIAFVASGIYLYCIGGILQFFPSLGAK.

Residues 1–15 (MKIFNYKRVPYAEIR) are Cytoplasmic-facing. A helical membrane pass occupies residues 16–36 (AFSVHILTASGSFLAFLGVVA). Topologically, residues 37 to 41 (ASEHR) are periplasmic. The chain crosses the membrane as a helical span at residues 42-62 (FVDMFWWLGLALLVDGIDGPI). Residues 63–76 (ARKVRVKEVLPNWS) are Cytoplasmic-facing. The helical transmembrane segment at 77–97 (GDTLDNIIDYVTYVLLPAFAL) threads the bilayer. The Periplasmic segment spans residues 98–100 (YQS). Residues 101–121 (GMIGEPLSFVAAGMIVVSSAI) traverse the membrane as a helical segment. Topologically, residues 122-133 (YYADMGMKTDEY) are cytoplasmic. Residues 134 to 154 (FFSGFPVVWNMVVFTLFVMDA) form a helical membrane-spanning segment. Over 155–159 (SATTA) the chain is Periplasmic. The helical transmembrane segment at 160 to 180 (MTVVTVSVFLTFLPINFLHPV) threads the bilayer. At 181 to 187 (RVKRLRP) the chain is on the cytoplasmic side. The helical transmembrane segment at 188–208 (LNLLVVAIWCALGGYALLMHF) threads the bilayer. Topologically, residues 209-214 (ETPTWA) are periplasmic. Residues 215–235 (VIAFVASGIYLYCIGGILQFF) traverse the membrane as a helical segment. The Cytoplasmic portion of the chain corresponds to 236–241 (PSLGAK).

This sequence belongs to the CDP-alcohol phosphatidyltransferase class-I family. It depends on Mn(2+) as a cofactor.

It is found in the cell inner membrane. It catalyses the reaction a CDP-1,2-diacyl-sn-glycerol + choline = a 1,2-diacyl-sn-glycero-3-phosphocholine + CMP + H(+). Condenses choline with CDP-diglyceride to produce phosphatidylcholine and CMP. Affects motility, biofilm formation and virulence of this bacterium when there is a complete loss of phosphatidylcholine formation due to absence of both the synthase (pcs) and the methylation (pmtA) pathways. This is Phosphatidylcholine synthase from Agrobacterium fabrum (strain C58 / ATCC 33970) (Agrobacterium tumefaciens (strain C58)).